The primary structure comprises 128 residues: Fatty acid binding protein 1-B.1 (128 aa).

The protein belongs to the calycin superfamily. Fatty-acid binding protein (FABP) family. As to expression, expressed in the yolk syncytial layer (YSL) and subsequently in the intestinal bulb in developing embryos and larvae. In adults, expressed in the intestine.

The protein localises to the cytoplasm. Its function is as follows. Binds free fatty acids and their coenzyme A derivatives, bilirubin, and some other small molecules in the cytoplasm. May be involved in intracellular lipid transport. The protein is Fatty acid binding protein 1-B.1 (fabp1b.1) of Danio rerio (Zebrafish).